Here is a 713-residue protein sequence, read N- to C-terminus: Polyribonucleotide nucleotidyltransferase (713 aa).

Positions 485 and 491 each coordinate Mg(2+). Positions 552–611 constitute a KH domain; that stretch reads PRIYTMKIDPKKIKDVIGKGGATVRSLTEETGTSIDIDDDGTVKIAAVDKNAVQEVMSRI. Positions 621-689 constitute an S1 motif domain; sequence GVVYKGKVTR…RQGRIRLTMK (69 aa). The disordered stretch occupies residues 694-713; the sequence is DQTKNEENLLQSEEGSPVQE. A compositionally biased stretch (polar residues) spans 701 to 713; sequence NLLQSEEGSPVQE.

Belongs to the polyribonucleotide nucleotidyltransferase family. Component of the RNA degradosome, which is a multiprotein complex involved in RNA processing and mRNA degradation. Requires Mg(2+) as cofactor.

The protein localises to the cytoplasm. It carries out the reaction RNA(n+1) + phosphate = RNA(n) + a ribonucleoside 5'-diphosphate. Its function is as follows. Involved in mRNA degradation. Catalyzes the phosphorolysis of single-stranded polyribonucleotides processively in the 3'- to 5'-direction. In Histophilus somni (strain 2336) (Haemophilus somnus), this protein is Polyribonucleotide nucleotidyltransferase.